A 652-amino-acid polypeptide reads, in one-letter code: DNA ligase (652 aa).

Residues 29–33, 78–79, and Glu107 contribute to the NAD(+) site; these read DSQYD and SL. The N6-AMP-lysine intermediate role is filled by Lys109. Arg130, Glu164, Lys278, and Lys302 together coordinate NAD(+). Zn(2+) is bound by residues Cys395, Cys398, Cys413, and Cys418. One can recognise a BRCT domain in the interval 577–652; the sequence is STDAQLSGLT…IQDEDWLLNL (76 aa).

This sequence belongs to the NAD-dependent DNA ligase family. LigA subfamily. Mg(2+) serves as cofactor. Requires Mn(2+) as cofactor.

The enzyme catalyses NAD(+) + (deoxyribonucleotide)n-3'-hydroxyl + 5'-phospho-(deoxyribonucleotide)m = (deoxyribonucleotide)n+m + AMP + beta-nicotinamide D-nucleotide.. Its function is as follows. DNA ligase that catalyzes the formation of phosphodiester linkages between 5'-phosphoryl and 3'-hydroxyl groups in double-stranded DNA using NAD as a coenzyme and as the energy source for the reaction. It is essential for DNA replication and repair of damaged DNA. This is DNA ligase from Streptococcus agalactiae serotype III (strain NEM316).